The sequence spans 447 residues: Serine/threonine-protein phosphatase 2A 55 kDa regulatory subunit B gamma isoform (447 aa).

7 WD repeats span residues Thr-22–Pro-61, Glu-87–Glu-128, Gly-171–Asn-209, Asp-220–Lys-260, Glu-279–Glu-317, Glu-334–Leu-375, and Asp-410–Met-446.

Belongs to the phosphatase 2A regulatory subunit B family. In terms of assembly, PP2A consists of a common heterodimeric core enzyme, composed of a 36 kDa catalytic subunit (subunit C) and a 65 kDa constant regulatory subunit (PR65 or subunit A), that associates with a variety of regulatory subunits. Proteins that associate with the core dimer include three families of regulatory subunits B (the R2/B/PR55/B55, R3/B''/PR72/PR130/PR59 and R5/B'/B56 families), the 48 kDa variable regulatory subunit, viral proteins, and cell signaling molecules. Interacts with IER5. Highly expressed in brain.

Functionally, the B regulatory subunit might modulate substrate selectivity and catalytic activity, and might also direct the localization of the catalytic enzyme to a particular subcellular compartment. The sequence is that of Serine/threonine-protein phosphatase 2A 55 kDa regulatory subunit B gamma isoform (Ppp2r2c) from Rattus norvegicus (Rat).